A 1214-amino-acid polypeptide reads, in one-letter code: Ubiquitin carboxyl-terminal hydrolase 36 (1214 aa).

The interval 124–169 (AVGSNGHDNNTVNGGTVNGNRKQTVDSGQSNQNSSANPNELPKPKR) is disordered. Low complexity predominate over residues 132–143 (NNTVNGGTVNGN). A compositionally biased stretch (polar residues) spans 144 to 161 (RKQTVDSGQSNQNSSANP). The region spanning 192–502 (AGMLNVGNTC…NAYIMFYELD (311 aa)) is the USP domain. Cysteine 201 serves as the catalytic Nucleophile. The active-site Proton acceptor is the histidine 461. The segment covering 509 to 523 (SSTINNNSSSSSNNS) has biased composition (low complexity). The tract at residues 509 to 532 (SSTINNNSSSSSNNSVAPKLNGLR) is disordered. Phosphoserine occurs at positions 553 and 555. Disordered regions lie at residues 631-819 (GEAA…KQKT), 836-964 (HRIA…ASKS), 977-1001 (QKLL…SESV), 1048-1161 (HGDT…PNFQ), and 1176-1214 (KFQQ…QQQS). Over residues 633–651 (AAPNANTNANANKSSCNNN) the composition is skewed to low complexity. Residues 666 to 685 (SDEDEDEDDSDDDDDDDDDD) show a composition bias toward acidic residues. A Phosphothreonine modification is found at threonine 717. 2 positions are modified to phosphoserine: serine 727 and serine 729. 2 stretches are compositionally biased toward low complexity: residues 735-751 (QQQQ…PQQL) and 785-816 (KTNG…NSSK). The segment covering 856–868 (EQVQTEQGTKKLN) has biased composition (polar residues). Positions 869 to 878 (SASSASASKS) are enriched in low complexity. Residue serine 891 is modified to Phosphoserine. A Phosphothreonine modification is found at threonine 894. Residue serine 897 is modified to Phosphoserine. Residues 915–942 (DDDDEEDEEEDDVEADADQEDDDDEVVV) show a composition bias toward acidic residues. Residue threonine 951 is modified to Phosphothreonine. Polar residues predominate over residues 983–1001 (SAKSAATTRPGNGYQSESV). The span at 1058–1076 (NSSSNNSSNINSNSNSNSN) shows a compositional bias: low complexity. Positions 1089 to 1098 (EAREQRKRDA) are enriched in basic and acidic residues. Low complexity-rich tracts occupy residues 1178 to 1188 (QQQRALQRHLA) and 1197 to 1214 (QQQS…QQQS).

Belongs to the peptidase C19 family. As to quaternary structure, interacts with atms/PAF1, but not with CycT.

It localises to the nucleus. Its subcellular location is the nucleolus. It carries out the reaction Thiol-dependent hydrolysis of ester, thioester, amide, peptide and isopeptide bonds formed by the C-terminal Gly of ubiquitin (a 76-residue protein attached to proteins as an intracellular targeting signal).. Its function is as follows. Required for maintaining multiple types of adult stem cells, including male and female germline, epithelial follicle cell and intestinal stem cells. May function as a transcriptional repressor by continually deubiquiting histone H2B at the promoters of genes critical for cellular differentiation, thereby preventing histone H3 'Lys-4' trimethylation (H3K4). Controls selective autophagy activation by ubiquitinated proteins. The chain is Ubiquitin carboxyl-terminal hydrolase 36 (Usp36) from Drosophila virilis (Fruit fly).